Here is a 272-residue protein sequence, read N- to C-terminus: NH(3)-dependent NAD(+) synthetase (272 aa).

ATP is bound at residue 45–52; sequence GISGGQDS. Asp51 provides a ligand contact to Mg(2+). Arg138 provides a ligand contact to deamido-NAD(+). Residue Thr158 participates in ATP binding. Glu163 serves as a coordination point for Mg(2+). Positions 171 and 178 each coordinate deamido-NAD(+). ATP is bound by residues Lys187 and Thr209. 258–259 contributes to the deamido-NAD(+) binding site; it reads HK.

Belongs to the NAD synthetase family. Homodimer.

The enzyme catalyses deamido-NAD(+) + NH4(+) + ATP = AMP + diphosphate + NAD(+) + H(+). It participates in cofactor biosynthesis; NAD(+) biosynthesis; NAD(+) from deamido-NAD(+) (ammonia route): step 1/1. Its function is as follows. Catalyzes the ATP-dependent amidation of deamido-NAD to form NAD. Uses ammonia as a nitrogen source. This Bacillus cereus (strain AH187) protein is NH(3)-dependent NAD(+) synthetase.